Reading from the N-terminus, the 147-residue chain is Hemoglobin subunit beta (147 aa).

Valine 2 is subject to N-acetylvaline. A Globin domain is found at 3 to 147 (HLTPEEKNAV…VANALAHKYH (145 aa)). Threonine 13 bears the Phosphothreonine mark. The residue at position 45 (serine 45) is a Phosphoserine. At lysine 60 the chain carries N6-acetyllysine. Histidine 64 lines the heme b pocket. The residue at position 83 (lysine 83) is an N6-acetyllysine. Position 93 (histidine 93) interacts with heme b. S-nitrosocysteine is present on cysteine 94. The residue at position 145 (lysine 145) is an N6-acetyllysine.

Belongs to the globin family. In terms of assembly, heterotetramer of two alpha chains and two beta chains. As to expression, red blood cells.

Functionally, involved in oxygen transport from the lung to the various peripheral tissues. The protein is Hemoglobin subunit beta (HBB) of Papio anubis (Olive baboon).